Reading from the N-terminus, the 465-residue chain is Uronate isomerase (465 aa).

This sequence belongs to the metallo-dependent hydrolases superfamily. Uronate isomerase family.

It catalyses the reaction D-glucuronate = D-fructuronate. It carries out the reaction aldehydo-D-galacturonate = keto-D-tagaturonate. Its pathway is carbohydrate metabolism; pentose and glucuronate interconversion. This chain is Uronate isomerase, found in Streptococcus equi subsp. zooepidemicus (strain MGCS10565).